Here is an 84-residue protein sequence, read N- to C-terminus: UPF0153 protein PA1578.1 (84 aa).

This sequence belongs to the UPF0153 family.

In Pseudomonas aeruginosa (strain ATCC 15692 / DSM 22644 / CIP 104116 / JCM 14847 / LMG 12228 / 1C / PRS 101 / PAO1), this protein is UPF0153 protein PA1578.1.